Here is a 509-residue protein sequence, read N- to C-terminus: Maturase K (509 aa).

Belongs to the intron maturase 2 family. MatK subfamily.

It is found in the plastid. The protein resides in the chloroplast. Functionally, usually encoded in the trnK tRNA gene intron. Probably assists in splicing its own and other chloroplast group II introns. The sequence is that of Maturase K from Clematis vitalba (Evergreen clematis).